A 1319-amino-acid chain; its full sequence is DNA-directed RNA polymerase subunit beta' (1319 aa).

Positions 60, 62, 75, and 78 each coordinate Zn(2+). D535, D537, and D539 together coordinate Mg(2+). Residues C890, C971, C978, and C981 each contribute to the Zn(2+) site.

Belongs to the RNA polymerase beta' chain family. In terms of assembly, the RNAP catalytic core consists of 2 alpha, 1 beta, 1 beta' and 1 omega subunit. When a sigma factor is associated with the core the holoenzyme is formed, which can initiate transcription. It depends on Mg(2+) as a cofactor. Requires Zn(2+) as cofactor.

The enzyme catalyses RNA(n) + a ribonucleoside 5'-triphosphate = RNA(n+1) + diphosphate. Its function is as follows. DNA-dependent RNA polymerase catalyzes the transcription of DNA into RNA using the four ribonucleoside triphosphates as substrates. The protein is DNA-directed RNA polymerase subunit beta' of Mycobacteroides abscessus (strain ATCC 19977 / DSM 44196 / CCUG 20993 / CIP 104536 / JCM 13569 / NCTC 13031 / TMC 1543 / L948) (Mycobacterium abscessus).